The sequence spans 264 residues: Thymidylate synthase (264 aa).

Arg-21 lines the dUMP pocket. His-51 lines the (6R)-5,10-methylene-5,6,7,8-tetrahydrofolate pocket. 126-127 (RR) lines the dUMP pocket. Cys-146 acts as the Nucleophile in catalysis. Residues 166 to 169 (RSAD), Asn-177, and 207 to 209 (HLY) contribute to the dUMP site. Asp-169 lines the (6R)-5,10-methylene-5,6,7,8-tetrahydrofolate pocket. Ala-263 lines the (6R)-5,10-methylene-5,6,7,8-tetrahydrofolate pocket.

Belongs to the thymidylate synthase family. Bacterial-type ThyA subfamily. In terms of assembly, homodimer.

It localises to the cytoplasm. It catalyses the reaction dUMP + (6R)-5,10-methylene-5,6,7,8-tetrahydrofolate = 7,8-dihydrofolate + dTMP. Its pathway is pyrimidine metabolism; dTTP biosynthesis. Catalyzes the reductive methylation of 2'-deoxyuridine-5'-monophosphate (dUMP) to 2'-deoxythymidine-5'-monophosphate (dTMP) while utilizing 5,10-methylenetetrahydrofolate (mTHF) as the methyl donor and reductant in the reaction, yielding dihydrofolate (DHF) as a by-product. This enzymatic reaction provides an intracellular de novo source of dTMP, an essential precursor for DNA biosynthesis. The chain is Thymidylate synthase from Azotobacter vinelandii (strain DJ / ATCC BAA-1303).